A 146-amino-acid polypeptide reads, in one-letter code: 3-dehydroquinate dehydratase (146 aa).

The Proton acceptor role is filled by Y23. N74, H80, and D87 together coordinate substrate. Catalysis depends on H100, which acts as the Proton donor. Substrate-binding positions include 101–102 and R111; that span reads IS.

Belongs to the type-II 3-dehydroquinase family. As to quaternary structure, homododecamer.

The catalysed reaction is 3-dehydroquinate = 3-dehydroshikimate + H2O. The protein operates within metabolic intermediate biosynthesis; chorismate biosynthesis; chorismate from D-erythrose 4-phosphate and phosphoenolpyruvate: step 3/7. In terms of biological role, catalyzes a trans-dehydration via an enolate intermediate. The sequence is that of 3-dehydroquinate dehydratase from Bacillus mycoides (strain KBAB4) (Bacillus weihenstephanensis).